The following is a 163-amino-acid chain: Protein-export protein SecB (163 aa).

It belongs to the SecB family. In terms of assembly, homotetramer, a dimer of dimers. One homotetramer interacts with 1 SecA dimer.

It is found in the cytoplasm. Its function is as follows. One of the proteins required for the normal export of preproteins out of the cell cytoplasm. It is a molecular chaperone that binds to a subset of precursor proteins, maintaining them in a translocation-competent state. It also specifically binds to its receptor SecA. In Pseudomonas aeruginosa (strain LESB58), this protein is Protein-export protein SecB.